The primary structure comprises 157 residues: MRIGHGYDVHRFGEGDYITLGGVRIPHKHGLVAHSDGDVLLHALSDALLGAAALGDIGKHFPDTDPRFKGADSRALLRHVVAIVAEKGWKVGNVDATIVAQAPKMAPHIETMRGLIAEDLGVALDQVNVKATTTERLGFTGREEGIAVHAVALLMAR.

A divalent metal cation is bound by residues D8 and H10. 4-CDP-2-C-methyl-D-erythritol 2-phosphate is bound by residues 8-10 and 34-35; these read DVH and HS. Residue H42 participates in a divalent metal cation binding. 4-CDP-2-C-methyl-D-erythritol 2-phosphate contacts are provided by residues 56–58, 61–65, 100–106, 132–135, F139, and R142; these read DIG, FPDTD, AQAPKMA, and TTTE.

Belongs to the IspF family. In terms of assembly, homotrimer. The cofactor is a divalent metal cation.

It carries out the reaction 4-CDP-2-C-methyl-D-erythritol 2-phosphate = 2-C-methyl-D-erythritol 2,4-cyclic diphosphate + CMP. It functions in the pathway isoprenoid biosynthesis; isopentenyl diphosphate biosynthesis via DXP pathway; isopentenyl diphosphate from 1-deoxy-D-xylulose 5-phosphate: step 4/6. Functionally, involved in the biosynthesis of isopentenyl diphosphate (IPP) and dimethylallyl diphosphate (DMAPP), two major building blocks of isoprenoid compounds. Catalyzes the conversion of 4-diphosphocytidyl-2-C-methyl-D-erythritol 2-phosphate (CDP-ME2P) to 2-C-methyl-D-erythritol 2,4-cyclodiphosphate (ME-CPP) with a corresponding release of cytidine 5-monophosphate (CMP). This chain is 2-C-methyl-D-erythritol 2,4-cyclodiphosphate synthase, found in Pseudomonas paraeruginosa (strain DSM 24068 / PA7) (Pseudomonas aeruginosa (strain PA7)).